The following is a 470-amino-acid chain: Regulator of microtubule dynamics protein 3 (470 aa).

Over 1–12 the chain is Mitochondrial intermembrane; the sequence is MSRLGALGGSRA. The helical transmembrane segment at 13–35 threads the bilayer; the sequence is GLGLLLGTAAGLGFLCVLYSQRW. At 36 to 470 the chain is on the cytoplasmic side; it reads KRTQRHGRSH…DLEELEVILG (435 aa). A phosphoserine mark is found at serine 44, serine 46, serine 50, and serine 57. A coiled-coil region spans residues 91–125; it reads LDRLDFVLTSLMALRREVEELQRSLQGLAGEIVGE. The FFAT signature appears at 157-163; it reads VYFTASS. Phosphothreonine is present on threonine 160. The tract at residues 168–205 is disordered; sequence TDAESEGGYTTANAESDYERDSDKESGDAEDEVSCETV. Phosphoserine occurs at positions 183, 193, 212, and 233. The segment covering 184–194 has biased composition (basic and acidic residues); the sequence is DYERDSDKESG.

Belongs to the RMDN family. Interacts with PTPN2. Interacts with microtubules. Interacts with VAPB. Interacts (via FFAT motif) with MOSPD2 (via MSP domain). Interacts (via phosphorylated FFAT motif) with MOSPD2, VAPA and VAPB. Phosphorylation at Thr-160 of the FFAT motif activates interaction with MOSPD2, VAPA and VAPB.

It is found in the mitochondrion outer membrane. The protein localises to the cytoplasm. The protein resides in the nucleus. Its subcellular location is the cytoskeleton. It localises to the spindle. It is found in the spindle pole. Functionally, involved in cellular calcium homeostasis regulation. May participate in differentiation and apoptosis of keratinocytes. Overexpression induces apoptosis. This chain is Regulator of microtubule dynamics protein 3, found in Mus musculus (Mouse).